Here is a 464-residue protein sequence, read N- to C-terminus: ATP synthase subunit beta (464 aa).

152–159 lines the ATP pocket; that stretch reads GGAGVGKT.

It belongs to the ATPase alpha/beta chains family. F-type ATPases have 2 components, CF(1) - the catalytic core - and CF(0) - the membrane proton channel. CF(1) has five subunits: alpha(3), beta(3), gamma(1), delta(1), epsilon(1). CF(0) has three main subunits: a(1), b(2) and c(9-12). The alpha and beta chains form an alternating ring which encloses part of the gamma chain. CF(1) is attached to CF(0) by a central stalk formed by the gamma and epsilon chains, while a peripheral stalk is formed by the delta and b chains.

The protein localises to the cell membrane. It carries out the reaction ATP + H2O + 4 H(+)(in) = ADP + phosphate + 5 H(+)(out). Its function is as follows. Produces ATP from ADP in the presence of a proton gradient across the membrane. The catalytic sites are hosted primarily by the beta subunits. The protein is ATP synthase subunit beta of Ureaplasma urealyticum serovar 10 (strain ATCC 33699 / Western).